The sequence spans 95 residues: UPF0358 protein BA_4159/GBAA_4159/BAS3861 (95 aa).

The protein belongs to the UPF0358 family.

This Bacillus anthracis protein is UPF0358 protein BA_4159/GBAA_4159/BAS3861.